We begin with the raw amino-acid sequence, 274 residues long: Large ribosomal subunit protein uL2 (274 aa).

A disordered region spans residues 223 to 257 (VAMNPVDHPHGGGEGRTSGGRHPVTPWGIPTKGYK).

Belongs to the universal ribosomal protein uL2 family. In terms of assembly, part of the 50S ribosomal subunit. Forms a bridge to the 30S subunit in the 70S ribosome.

Functionally, one of the primary rRNA binding proteins. Required for association of the 30S and 50S subunits to form the 70S ribosome, for tRNA binding and peptide bond formation. It has been suggested to have peptidyltransferase activity; this is somewhat controversial. Makes several contacts with the 16S rRNA in the 70S ribosome. This Geobacter sulfurreducens (strain ATCC 51573 / DSM 12127 / PCA) protein is Large ribosomal subunit protein uL2.